Reading from the N-terminus, the 95-residue chain is Small ribosomal subunit protein bS6 (95 aa).

Belongs to the bacterial ribosomal protein bS6 family.

In terms of biological role, binds together with bS18 to 16S ribosomal RNA. The protein is Small ribosomal subunit protein bS6 of Thermoanaerobacter pseudethanolicus (strain ATCC 33223 / 39E) (Clostridium thermohydrosulfuricum).